The sequence spans 422 residues: MYKFRIQGSDKPLSGEVTISGAKNAALPILFAALLAEEPVEVANVPKLRDVDTTIELLQRLGAKVSRNGSVHIDASEVNNFCAPYDLVKTMRASIWALGPLVARFGKGQVSLPGGCAIGARPVDLHIHGLEQLGATIKLEDGYVKAEVDGRLKGAHIVMDKVSVGATITVMCAATLAEGTTILENAAREPEIVDTAHFLNAIGAKVSGMGTDTITIEGVERLGGGYHEVVADRIETGTFLVAAAVSGGKVVCKNTKASLLESVLAKLEEAGAKVESGEDWISLDMTGRELKAVNIRTAPHPAFPTDMQAQFTLLNMMAKGPGIITETIFENRFMHIPELQRMGAHAEIEGNTAICGDTDGLSGAQVMATDLRASASLVIAGCIAKGETIVDRIYHIDRGYDKIEDKLTALGANIERVRSSEL.

23–24 (KN) serves as a coordination point for phosphoenolpyruvate. Arg92 is a binding site for UDP-N-acetyl-alpha-D-glucosamine. The Proton donor role is filled by Cys116. Cys116 bears the 2-(S-cysteinyl)pyruvic acid O-phosphothioketal mark. UDP-N-acetyl-alpha-D-glucosamine contacts are provided by residues 121–125 (RPVDL), 161–164 (KVSV), Asp306, and Ile328.

The protein belongs to the EPSP synthase family. MurA subfamily.

Its subcellular location is the cytoplasm. The catalysed reaction is phosphoenolpyruvate + UDP-N-acetyl-alpha-D-glucosamine = UDP-N-acetyl-3-O-(1-carboxyvinyl)-alpha-D-glucosamine + phosphate. It functions in the pathway cell wall biogenesis; peptidoglycan biosynthesis. Cell wall formation. Adds enolpyruvyl to UDP-N-acetylglucosamine. The sequence is that of UDP-N-acetylglucosamine 1-carboxyvinyltransferase from Aliivibrio salmonicida (strain LFI1238) (Vibrio salmonicida (strain LFI1238)).